Consider the following 630-residue polypeptide: MDFPSRFEVIVIGGGHAGTEAALASARMGVKTLLLTHNVETLGHMSCNPAIGGIGKSHLVKEIDALGGAMALATDMSGIQFRVLNNRKGPAVRATRAQADRAIYKAVVREILENQPNLWIFQQSCDDLIVEQDQVKGVVTQMGLRFFADSVVLTSGTFLGGLIHIGLQNYSGGRAGDPPANALAQRMRELPLRVGRLKTGTPPRIDGRSVDFSVMTEQPGDTPIPVMSFMGNAAMHPRQVSCWITHTNARTHEIIASNLDRSPMYSGVIEGIGPRYCPSIEDKIHRFADKESHQVFIEPEGLTTHELYPNGISTSLPFDVQLEIVRSIRGMENAHIVRPGYAIEYDYFDPRDLKYSLETKVIGGLFFAGQINGTTGYEEAGAQGLLAGTNAALRAQGRESWCPRRDEAYIGVLVDDLITLGTQEPYRMFTSRAEYRLILREDNADLRLTEKGRELGLIDDARWAAFCAKREGIEREEQRLKSTWVRPGTPQGQAVVDKFGTPLAHEYSLLNLLARPEVDYAGLIEATGGEVIDPQVAEQVEIKTKYAGYIDRQQEEIARLRASEDTRLPVDIDYTTISGLSKEIQGKLEQTRPETLGQASRIPGVTPAAISLLLIHLKKRGAGRELEQSA.

13–18 is a binding site for FAD; it reads GGGHAG. 273-287 serves as a coordination point for NAD(+); that stretch reads GPRYCPSIEDKIHRF.

The protein belongs to the MnmG family. Homodimer. Heterotetramer of two MnmE and two MnmG subunits. The cofactor is FAD.

It is found in the cytoplasm. Functionally, NAD-binding protein involved in the addition of a carboxymethylaminomethyl (cmnm) group at the wobble position (U34) of certain tRNAs, forming tRNA-cmnm(5)s(2)U34. This Pseudomonas entomophila (strain L48) protein is tRNA uridine 5-carboxymethylaminomethyl modification enzyme MnmG.